Here is a 197-residue protein sequence, read N- to C-terminus: ATP-dependent Clp protease proteolytic subunit (197 aa).

The active-site Nucleophile is the Ser-98. The active site involves His-123.

It belongs to the peptidase S14 family. Fourteen ClpP subunits assemble into 2 heptameric rings which stack back to back to give a disk-like structure with a central cavity, resembling the structure of eukaryotic proteasomes.

The protein localises to the cytoplasm. The enzyme catalyses Hydrolysis of proteins to small peptides in the presence of ATP and magnesium. alpha-casein is the usual test substrate. In the absence of ATP, only oligopeptides shorter than five residues are hydrolyzed (such as succinyl-Leu-Tyr-|-NHMec, and Leu-Tyr-Leu-|-Tyr-Trp, in which cleavage of the -Tyr-|-Leu- and -Tyr-|-Trp bonds also occurs).. Its function is as follows. Cleaves peptides in various proteins in a process that requires ATP hydrolysis. Has a chymotrypsin-like activity. Plays a major role in the degradation of misfolded proteins. In Lysinibacillus sphaericus (strain C3-41), this protein is ATP-dependent Clp protease proteolytic subunit.